Reading from the N-terminus, the 75-residue chain is uncharacterized protein (75 aa).

2 consecutive transmembrane segments (helical) span residues 5 to 25 and 42 to 62; these read VIIC…IFEI and VAIF…GSVL.

It localises to the membrane. This is an uncharacterized protein from Saccharomyces cerevisiae (strain ATCC 204508 / S288c) (Baker's yeast).